The primary structure comprises 257 residues: UPF0246 protein Ent638_0568 (257 aa).

The protein belongs to the UPF0246 family.

The protein is UPF0246 protein Ent638_0568 of Enterobacter sp. (strain 638).